The chain runs to 52 residues: Light-harvesting protein B-880 alpha chain (52 aa).

At 1 to 12 (MWKVWLLFDPRR) the chain is on the cytoplasmic side. The chain crosses the membrane as a helical span at residues 13 to 33 (TLVALFTFLFVLALLIHFILL). Histidine 29 lines the a bacteriochlorophyll pocket. Residues 34–52 (STDRFNWMQGAPTAPAQTS) lie on the Periplasmic side of the membrane.

This sequence belongs to the antenna complex alpha subunit family. The core complex is formed by different alpha and beta chains, binding bacteriochlorophyll molecules, and arranged most probably in tetrameric structures disposed around the reaction center. The non-pigmented gamma chains may constitute additional components.

Its subcellular location is the cell inner membrane. In terms of biological role, antenna complexes are light-harvesting systems, which transfer the excitation energy to the reaction centers. In Afifella marina (Rhodobium marinum), this protein is Light-harvesting protein B-880 alpha chain.